Reading from the N-terminus, the 427-residue chain is Glucose-6-phosphate isomerase (427 aa).

Glu277 functions as the Proton donor in the catalytic mechanism. Catalysis depends on residues His298 and Lys414.

This sequence belongs to the GPI family.

Its subcellular location is the cytoplasm. The catalysed reaction is alpha-D-glucose 6-phosphate = beta-D-fructose 6-phosphate. It participates in carbohydrate biosynthesis; gluconeogenesis. The protein operates within carbohydrate degradation; glycolysis; D-glyceraldehyde 3-phosphate and glycerone phosphate from D-glucose: step 2/4. Its function is as follows. Catalyzes the reversible isomerization of glucose-6-phosphate to fructose-6-phosphate. The sequence is that of Glucose-6-phosphate isomerase from Mycoplasma mycoides subsp. mycoides SC (strain CCUG 32753 / NCTC 10114 / PG1).